Reading from the N-terminus, the 192-residue chain is Large ribosomal subunit protein bL25 (192 aa).

This sequence belongs to the bacterial ribosomal protein bL25 family. CTC subfamily. Part of the 50S ribosomal subunit; part of the 5S rRNA/L5/L18/L25 subcomplex. Contacts the 5S rRNA. Binds to the 5S rRNA independently of L5 and L18.

Functionally, this is one of the proteins that binds to the 5S RNA in the ribosome where it forms part of the central protuberance. This Porphyromonas gingivalis (strain ATCC 33277 / DSM 20709 / CIP 103683 / JCM 12257 / NCTC 11834 / 2561) protein is Large ribosomal subunit protein bL25.